We begin with the raw amino-acid sequence, 141 residues long: Hemoglobin subunit alpha (141 aa).

One can recognise a Globin domain in the interval valine 1–arginine 141. Serine 3 bears the Phosphoserine mark. Lysine 7 is modified (N6-succinyllysine). Threonine 8 carries the post-translational modification Phosphothreonine. Lysine 11 bears the N6-succinyllysine mark. Lysine 16 is subject to N6-acetyllysine; alternate. Lysine 16 bears the N6-succinyllysine; alternate mark. Tyrosine 24 carries the post-translational modification Phosphotyrosine. Phosphoserine is present on serine 35. Lysine 40 carries the N6-succinyllysine modification. Serine 49 carries the phosphoserine modification. O2 is bound at residue histidine 58. Histidine 87 is a heme b binding site. A Phosphoserine modification is found at serine 102. Threonine 108 carries the post-translational modification Phosphothreonine. The residue at position 124 (serine 124) is a Phosphoserine. Residues threonine 134 and threonine 137 each carry the phosphothreonine modification. Phosphoserine is present on serine 138.

This sequence belongs to the globin family. In terms of assembly, heterotetramer of two alpha chains and two beta chains. As to expression, red blood cells.

Its function is as follows. Involved in oxygen transport from the lung to the various peripheral tissues. In terms of biological role, hemopressin acts as an antagonist peptide of the cannabinoid receptor CNR1. Hemopressin-binding efficiently blocks cannabinoid receptor CNR1 and subsequent signaling. The sequence is that of Hemoglobin subunit alpha (HBA) from Pteronura brasiliensis (Giant otter).